The chain runs to 218 residues: uncharacterized protein (218 aa).

A run of 2 helical transmembrane segments spans residues 14-34 (CLLSIITILLYWYLRFVYFTS) and 175-195 (LIIPIPFGTIKIIVGSPLALV).

This sequence to H.pylori HP0270.

The protein resides in the cell membrane. This is an uncharacterized protein from Rickettsia prowazekii (strain Madrid E).